The chain runs to 319 residues: RWD domain-containing protein 2B (319 aa).

Residues 41–165 (AELDLLASMF…EWVREHASGY (125 aa)) enclose the RWD domain. Phosphoserine is present on S275.

In terms of tissue distribution, ubiquitous.

This chain is RWD domain-containing protein 2B (RWDD2B), found in Homo sapiens (Human).